A 211-amino-acid chain; its full sequence is FMN-dependent NADH:quinone oxidoreductase (211 aa).

17–19 is an FMN binding site; sequence SYS.

The protein belongs to the azoreductase type 1 family. As to quaternary structure, homodimer. It depends on FMN as a cofactor.

The catalysed reaction is 2 a quinone + NADH + H(+) = 2 a 1,4-benzosemiquinone + NAD(+). The enzyme catalyses N,N-dimethyl-1,4-phenylenediamine + anthranilate + 2 NAD(+) = 2-(4-dimethylaminophenyl)diazenylbenzoate + 2 NADH + 2 H(+). In terms of biological role, quinone reductase that provides resistance to thiol-specific stress caused by electrophilic quinones. Also exhibits azoreductase activity. Catalyzes the reductive cleavage of the azo bond in aromatic azo compounds to the corresponding amines. The chain is FMN-dependent NADH:quinone oxidoreductase from Bacillus velezensis (strain DSM 23117 / BGSC 10A6 / LMG 26770 / FZB42) (Bacillus amyloliquefaciens subsp. plantarum).